A 439-amino-acid polypeptide reads, in one-letter code: D-inositol 3-phosphate glycosyltransferase (439 aa).

Residue His-21 coordinates 1D-myo-inositol 3-phosphate. UDP-N-acetyl-alpha-D-glucosamine-binding positions include 27 to 28 (QP) and Gly-35. 1D-myo-inositol 3-phosphate contacts are provided by residues 32–37 (DAGGMN), Lys-90, Tyr-123, Thr-147, and Arg-167. Residues Arg-241, Lys-246, and Gln-299 each contribute to the UDP-N-acetyl-alpha-D-glucosamine site. Residues Tyr-308, Arg-309, and Ala-311 each contribute to the Mg(2+) site. 2 residues coordinate UDP-N-acetyl-alpha-D-glucosamine: Glu-321 and Glu-329. Thr-335 lines the Mg(2+) pocket.

Belongs to the glycosyltransferase group 1 family. MshA subfamily. Homodimer.

It carries out the reaction 1D-myo-inositol 3-phosphate + UDP-N-acetyl-alpha-D-glucosamine = 1D-myo-inositol 2-acetamido-2-deoxy-alpha-D-glucopyranoside 3-phosphate + UDP + H(+). In terms of biological role, catalyzes the transfer of a N-acetyl-glucosamine moiety to 1D-myo-inositol 3-phosphate to produce 1D-myo-inositol 2-acetamido-2-deoxy-glucopyranoside 3-phosphate in the mycothiol biosynthesis pathway. The polypeptide is D-inositol 3-phosphate glycosyltransferase (Mycobacterium sp. (strain KMS)).